We begin with the raw amino-acid sequence, 490 residues long: Aspartyl/glutamyl-tRNA(Asn/Gln) amidotransferase subunit B (490 aa).

Belongs to the GatB/GatE family. GatB subfamily. As to quaternary structure, heterotrimer of A, B and C subunits.

The catalysed reaction is L-glutamyl-tRNA(Gln) + L-glutamine + ATP + H2O = L-glutaminyl-tRNA(Gln) + L-glutamate + ADP + phosphate + H(+). The enzyme catalyses L-aspartyl-tRNA(Asn) + L-glutamine + ATP + H2O = L-asparaginyl-tRNA(Asn) + L-glutamate + ADP + phosphate + 2 H(+). Functionally, allows the formation of correctly charged Asn-tRNA(Asn) or Gln-tRNA(Gln) through the transamidation of misacylated Asp-tRNA(Asn) or Glu-tRNA(Gln) in organisms which lack either or both of asparaginyl-tRNA or glutaminyl-tRNA synthetases. The reaction takes place in the presence of glutamine and ATP through an activated phospho-Asp-tRNA(Asn) or phospho-Glu-tRNA(Gln). This is Aspartyl/glutamyl-tRNA(Asn/Gln) amidotransferase subunit B from Prochlorococcus marinus (strain MIT 9312).